The sequence spans 217 residues: Deoxyribose-phosphate aldolase (217 aa).

Aspartate 89 acts as the Proton donor/acceptor in catalysis. Lysine 151 serves as the catalytic Schiff-base intermediate with acetaldehyde. Residue lysine 180 is the Proton donor/acceptor of the active site.

Belongs to the DeoC/FbaB aldolase family. DeoC type 1 subfamily.

The protein resides in the cytoplasm. It catalyses the reaction 2-deoxy-D-ribose 5-phosphate = D-glyceraldehyde 3-phosphate + acetaldehyde. The protein operates within carbohydrate degradation; 2-deoxy-D-ribose 1-phosphate degradation; D-glyceraldehyde 3-phosphate and acetaldehyde from 2-deoxy-alpha-D-ribose 1-phosphate: step 2/2. Functionally, catalyzes a reversible aldol reaction between acetaldehyde and D-glyceraldehyde 3-phosphate to generate 2-deoxy-D-ribose 5-phosphate. The protein is Deoxyribose-phosphate aldolase of Mycoplasma mobile (strain ATCC 43663 / 163K / NCTC 11711) (Mesomycoplasma mobile).